A 399-amino-acid chain; its full sequence is Phosphoglycerate kinase (399 aa).

Substrate is bound by residues 22–24 (DFN), arginine 38, 61–64 (HLGR), arginine 120, and arginine 153. Residues lysine 204, glutamate 326, and 353–356 (GGDT) each bind ATP.

The protein belongs to the phosphoglycerate kinase family. Monomer.

It is found in the cytoplasm. The catalysed reaction is (2R)-3-phosphoglycerate + ATP = (2R)-3-phospho-glyceroyl phosphate + ADP. It functions in the pathway carbohydrate degradation; glycolysis; pyruvate from D-glyceraldehyde 3-phosphate: step 2/5. The protein is Phosphoglycerate kinase of Geotalea daltonii (strain DSM 22248 / JCM 15807 / FRC-32) (Geobacter daltonii).